Here is a 179-residue protein sequence, read N- to C-terminus: Large ribosomal subunit protein uL5 (179 aa).

The protein belongs to the universal ribosomal protein uL5 family. As to quaternary structure, part of the 50S ribosomal subunit; part of the 5S rRNA/L5/L18/L25 subcomplex. Contacts the 5S rRNA and the P site tRNA. Forms a bridge to the 30S subunit in the 70S ribosome.

In terms of biological role, this is one of the proteins that bind and probably mediate the attachment of the 5S RNA into the large ribosomal subunit, where it forms part of the central protuberance. In the 70S ribosome it contacts protein S13 of the 30S subunit (bridge B1b), connecting the 2 subunits; this bridge is implicated in subunit movement. Contacts the P site tRNA; the 5S rRNA and some of its associated proteins might help stabilize positioning of ribosome-bound tRNAs. The sequence is that of Large ribosomal subunit protein uL5 from Klebsiella pneumoniae (strain 342).